Consider the following 129-residue polypeptide: Small ribosomal subunit protein uS11 (129 aa).

It belongs to the universal ribosomal protein uS11 family. In terms of assembly, part of the 30S ribosomal subunit. Interacts with proteins S7 and S18. Binds to IF-3.

In terms of biological role, located on the platform of the 30S subunit, it bridges several disparate RNA helices of the 16S rRNA. Forms part of the Shine-Dalgarno cleft in the 70S ribosome. The polypeptide is Small ribosomal subunit protein uS11 (Geobacillus kaustophilus (strain HTA426)).